Consider the following 372-residue polypeptide: Alanine dehydrogenase 2 (372 aa).

H95 is an active-site residue. 169-199 (KVTIIGGGQAGTNAAKIALGLGADVTILDVN) is a binding site for NAD(+).

It belongs to the AlaDH/PNT family.

It carries out the reaction L-alanine + NAD(+) + H2O = pyruvate + NH4(+) + NADH + H(+). The protein operates within amino-acid degradation; L-alanine degradation via dehydrogenase pathway; NH(3) and pyruvate from L-alanine: step 1/1. Functionally, may play a role in cell wall synthesis as L-alanine is an important constituent of the peptidoglycan layer. This is Alanine dehydrogenase 2 (ald2) from Staphylococcus aureus (strain COL).